Here is a 478-residue protein sequence, read N- to C-terminus: Methionine aminopeptidase 2 (478 aa).

The disordered stretch occupies residues 1–122 (MAGVEQAASF…TDPPSVPICD (122 aa)). Ala-2 is modified (N-acetylalanine). Residues 36-46 (KKKRRKKKKGK) are compositionally biased toward basic residues. Ser-60 bears the Phosphoserine; alternate mark. A glycan (O-linked (GlcNAc) serine; alternate) is linked at Ser-60. The segment covering 80-92 (ERDDDDEDGDGDA) has biased composition (acidic residues). The span at 97–109 (GKKKKKKKKKRGP) shows a compositional bias: basic residues. His-231 contacts substrate. Residues Asp-251, Asp-262, and His-331 each coordinate a divalent metal cation. His-339 contributes to the substrate binding site. 2 residues coordinate a divalent metal cation: Glu-364 and Glu-459.

This sequence belongs to the peptidase M24A family. Methionine aminopeptidase eukaryotic type 2 subfamily. In terms of assembly, binds EIF2S1 at low magnesium concentrations. Interacts strongly with the eIF-2 gamma-subunit EIF2S3. The cofactor is Co(2+). It depends on Zn(2+) as a cofactor. Mn(2+) is required as a cofactor. Fe(2+) serves as cofactor. Post-translationally, contains approximately 12 O-linked N-acetylglucosamine (GlcNAc) residues. O-glycosylation is required for EIF2S1 binding.

The protein resides in the cytoplasm. It carries out the reaction Release of N-terminal amino acids, preferentially methionine, from peptides and arylamides.. Functionally, cotranslationally removes the N-terminal methionine from nascent proteins. The N-terminal methionine is often cleaved when the second residue in the primary sequence is small and uncharged (Met-Ala-, Cys, Gly, Pro, Ser, Thr, or Val). In terms of biological role, protects eukaryotic initiation factor EIF2S1 from translation-inhibiting phosphorylation by inhibitory kinases such as EIF2AK2/PKR and EIF2AK1/HCR. Plays a critical role in the regulation of protein synthesis. In Mus musculus (Mouse), this protein is Methionine aminopeptidase 2 (Metap2).